Consider the following 956-residue polypeptide: DNA replication helicase (956 aa).

ATP is bound at residue 120–127 (GTAGAGKT). Positions 658–694 (PINNHVDADSSQGGQSVPVSQRMEHGQEETHDIPCLS) are disordered. Residues 667–678 (SSQGGQSVPVSQ) show a composition bias toward low complexity. Residues 679–694 (RMEHGQEETHDIPCLS) show a composition bias toward basic and acidic residues.

It belongs to the herpesviridae helicase family. In terms of assembly, associates with the primase and the primase-associated factor to form the helicase-primase complex.

The protein resides in the host nucleus. Its function is as follows. Component of the helicase/primase complex. Unwinds the DNA at the replication forks and generates single-stranded DNA for both leading and lagging strand synthesis. The primase synthesizes short RNA primers on the lagging strand that the polymerase elongates using dNTPs. Possesses helicase-like motifs and therefore may act as the helicase subunit of the complex. This is DNA replication helicase from Human cytomegalovirus (strain Merlin) (HHV-5).